A 416-amino-acid chain; its full sequence is Squamosa promoter-binding-like protein 8 (416 aa).

Residues 11–53 (SSCDDFGYNATPPPPPSLLPIMDQDGGGGSIQRDHHHHHNHQQ) are disordered. The segment at 182-260 (PPRCQAEGCK…ADHNRRRRKS (79 aa)) adopts an SBP-type zinc-finger fold. Zn(2+) is bound by residues C185, C190, C207, H210, C227, C230, H234, and C246. The Bipartite nuclear localization signal motif lies at 243-259 (KKSCRKRLADHNRRRRK). Residues 250 to 299 (LADHNRRRRKSKPSDGEHSGEKRRAQANKSAATKDKAGSSSKNAGIGDGF) form a disordered region. Positions 261-273 (KPSDGEHSGEKRR) are enriched in basic and acidic residues.

Expressed in stems, leaf sheaths, and young panicles.

It is found in the nucleus. Functionally, probable transcription factor that plays an important role in building the laminar joint between leaf blade and leaf sheath boundary, thereby controlling ligule and auricle development. In Oryza sativa subsp. indica (Rice), this protein is Squamosa promoter-binding-like protein 8 (SPL8).